A 325-amino-acid chain; its full sequence is Acetyl-coenzyme A carboxylase carboxyl transferase subunit alpha (325 aa).

Residues 35–292 (EIEKLEARLT…DRVLRASLKQ (258 aa)) enclose the CoA carboxyltransferase C-terminal domain.

This sequence belongs to the AccA family. As to quaternary structure, acetyl-CoA carboxylase is a heterohexamer composed of biotin carboxyl carrier protein (AccB), biotin carboxylase (AccC) and two subunits each of ACCase subunit alpha (AccA) and ACCase subunit beta (AccD).

It localises to the cytoplasm. It carries out the reaction N(6)-carboxybiotinyl-L-lysyl-[protein] + acetyl-CoA = N(6)-biotinyl-L-lysyl-[protein] + malonyl-CoA. The protein operates within lipid metabolism; malonyl-CoA biosynthesis; malonyl-CoA from acetyl-CoA: step 1/1. In terms of biological role, component of the acetyl coenzyme A carboxylase (ACC) complex. First, biotin carboxylase catalyzes the carboxylation of biotin on its carrier protein (BCCP) and then the CO(2) group is transferred by the carboxyltransferase to acetyl-CoA to form malonyl-CoA. The sequence is that of Acetyl-coenzyme A carboxylase carboxyl transferase subunit alpha from Geobacillus thermodenitrificans (strain NG80-2).